The primary structure comprises 1960 residues: Myosin-9 (1960 aa).

N-acetylalanine is present on alanine 2. Residues 2-838 (AQQAADKYLY…RLFTKVKPLL (837 aa)) form a mediates interaction with LIMCH1 region. N6-acetyllysine is present on lysine 8. The residue at position 11 (tyrosine 11) is a Phosphotyrosine. The 51-residue stretch at 27–77 (AAKKLVWVPSSKNGFEPASLKEEVGEEAIVELVENGKKVKVNKDDIQKMNP) folds into the Myosin N-terminal SH3-like domain. A Myosin motor domain is found at 81–776 (SKVEDMAELT…VLAHLEEERD (696 aa)). Lysine 102 is modified (N6-acetyllysine). An ATP-binding site is contributed by 174-181 (GESGAGKT). An N6-acetyllysine mark is found at lysine 299, lysine 435, and lysine 613. Serine 628 is subject to Phosphoserine. Residues 654-676 (LAKLMATLRNTNPNFVRCIIPNH) form an actin-binding region. Tyrosine 754 carries the post-translational modification Phosphotyrosine. In terms of domain architecture, IQ spans 779–808 (ITDVIIGFQACCRGYLARKAFAKRQQQLTA). A coiled-coil region spans residues 841-1926 (IRHEDELLAK…LKNKLRRGDL (1086 aa)). Residue lysine 850 is modified to N6-succinyllysine. An N6-acetyllysine mark is found at lysine 860, lysine 975, and lysine 1024. The segment covering 1035-1055 (RLRREEKQRQELEKTRRKLEG) has biased composition (basic and acidic residues). The interval 1035-1057 (RLRREEKQRQELEKTRRKLEGDS) is disordered. Serine 1114 bears the Phosphoserine mark. The tract at residues 1117–1167 (QEDLESERASRNKAEKQKRDLGEELEALKTELEDTLDSTAAQQELRSKREQ) is disordered. Positions 1122 to 1148 (SERASRNKAEKQKRDLGEELEALKTEL) are enriched in basic and acidic residues. N6-acetyllysine occurs at positions 1234 and 1249. The tract at residues 1327–1352 (LSTKLKQMEDEKNSFREQLEEEEEAK) is disordered. Basic and acidic residues predominate over residues 1332–1352 (KQMEDEKNSFREQLEEEEEAK). An N6-acetyllysine mark is found at lysine 1357, lysine 1392, lysine 1404, lysine 1410, lysine 1459, and lysine 1638. Lysine 1669 carries the post-translational modification N6-succinyllysine. Serine 1714 carries the post-translational modification Phosphoserine. Residues 1768–1788 (LERSHAQKNENARQQLERQNK) form a disordered region. N6-acetyllysine occurs at positions 1793, 1802, and 1845. Residues 1877–1908 (RQLEEAEEEAQRANASRRKLQRELEDATETAD) are disordered. At arginine 1923 the chain carries Omega-N-methylarginine. The residue at position 1939 (threonine 1939) is a Phosphothreonine. The interval 1939–1960 (TGDCSDEEVDGKADGADAKAAE) is disordered. Serine 1943 bears the Phosphoserine mark. Basic and acidic residues predominate over residues 1948 to 1960 (DGKADGADAKAAE).

It belongs to the TRAFAC class myosin-kinesin ATPase superfamily. Myosin family. Myosin is a hexameric protein that consists of 2 heavy chain subunits (MHC), 2 alkali light chain subunits (MLC) and 2 regulatory light chain subunits (MLC-2). Interacts with RASIP1. Interacts with DDR1. Interacts with PDLIM2. Interacts with SVIL. Interacts with HTRA3. Interacts with Myo7a. Interacts with CFAP95. Interacts with LIMCH1; independently of the integration of MYH9 into the myosin complex. Interacts with RAB3A. Interacts with ZBED4. Interacts with S100A4; this interaction increases cell motility. In terms of processing, ISGylated. Ubiquitination.

Its subcellular location is the cytoplasm. The protein localises to the cytoskeleton. It is found in the cell cortex. It localises to the cytoplasmic vesicle. The protein resides in the secretory vesicle. Its subcellular location is the cortical granule. Cellular myosin that appears to play a role in cytokinesis, cell shape, and specialized functions such as secretion and capping. Required for cortical actin clearance prior to oocyte exocytosis. Promotes cell motility in conjunction with S100A4. During cell spreading, plays an important role in cytoskeleton reorganization, focal contact formation (in the margins but not the central part of spreading cells), and lamellipodial retraction; this function is mechanically antagonized by MYH10. The chain is Myosin-9 (Myh9) from Mus musculus (Mouse).